Reading from the N-terminus, the 800-residue chain is Ribosome-releasing factor 2, mitochondrial (800 aa).

The tr-type G domain maps to 21–307; the sequence is SKVRNIGIIA…AIANYLPSPS (287 aa). GTP-binding positions include 30–37, 95–99, and 147–150; these read AHIDAGKT, DTPGH, and NKMD.

This sequence belongs to the TRAFAC class translation factor GTPase superfamily. Classic translation factor GTPase family. EF-G/EF-2 subfamily.

It is found in the mitochondrion. Its function is as follows. Mitochondrial GTPase that mediates the disassembly of ribosomes from messenger RNA at the termination of mitochondrial protein biosynthesis. Not involved in the GTP-dependent ribosomal translocation step during translation elongation. The protein is Ribosome-releasing factor 2, mitochondrial of Kluyveromyces lactis (strain ATCC 8585 / CBS 2359 / DSM 70799 / NBRC 1267 / NRRL Y-1140 / WM37) (Yeast).